The primary structure comprises 106 residues: Toxin-like structure LSTX-D5 (106 aa).

An N-terminal signal peptide occupies residues 1 to 20 (MMKVLVVVALLVTLISYSSS). Positions 21-41 (EGIDDLETDELLSLMANEQTR) are excised as a propeptide. Disulfide bonds link C45-C60, C52-C69, C59-C85, and C71-C83.

The protein belongs to the neurotoxin 19 (CSTX) family. 02 (D7) subfamily. In terms of tissue distribution, expressed by the venom gland.

It localises to the secreted. The chain is Toxin-like structure LSTX-D5 from Lycosa singoriensis (Wolf spider).